The primary structure comprises 71 residues: Brevinin-1HN1 (71 aa).

The first 22 residues, 1–22 (MFTSKKPLLLLFFLGTINLSLC), serve as a signal peptide directing secretion. Positions 23 to 45 (EQERDADEEERRDDPDERDVEVE) are excised as a propeptide. C65 and C71 are oxidised to a cystine.

Expressed by the skin glands.

Its subcellular location is the secreted. Its function is as follows. Has antimicrobial activity against Gram-positive bacteria and fungi but has weak or no activity against a range of Gram-negative bacteria except P.faecalis. Active against the Gram-positive bacteria E.faecium 091299 (MIC=19 uM), E.faecalis 981 (MIC=19 uM), S.aureus ATCC 25923 (MIC=1.2 uM), S.carnosus KHS (MIC=4.8 uM), B.licheniformis X39 (MIC=2.4 uM) and R.rhodochrous X15 (MIC=1.2 uM). Active against the Gram-negative bacterium P.faecalis X29 (MIC=4.8 uM), is virtually inactive against E.coli ATCC 25922 (MIC=150 uM) and inactive against P.aeruginosa and S.typhi. Has antifungal activity against C.albicans ATCC 2002 (MIC=2.4 uM) and is also active against the slime mold 090223 (MIC=1.2 uM). Has low hemolytic activity against human erythrocytes (LC(50)=75 uM). In Odorrana hainanensis (Odor frog), this protein is Brevinin-1HN1.